The chain runs to 217 residues: 3,4-dihydroxy-2-butanone 4-phosphate synthase (217 aa).

D-ribulose 5-phosphate is bound by residues 37–38 (RE), D42, 150–154 (RGGHT), and E174. Residue E38 participates in Mg(2+) binding. H153 provides a ligand contact to Mg(2+).

Belongs to the DHBP synthase family. Homodimer. The cofactor is Mg(2+). Mn(2+) is required as a cofactor.

It carries out the reaction D-ribulose 5-phosphate = (2S)-2-hydroxy-3-oxobutyl phosphate + formate + H(+). The protein operates within cofactor biosynthesis; riboflavin biosynthesis; 2-hydroxy-3-oxobutyl phosphate from D-ribulose 5-phosphate: step 1/1. Catalyzes the conversion of D-ribulose 5-phosphate to formate and 3,4-dihydroxy-2-butanone 4-phosphate. This chain is 3,4-dihydroxy-2-butanone 4-phosphate synthase, found in Shigella boydii serotype 18 (strain CDC 3083-94 / BS512).